A 353-amino-acid chain; its full sequence is Sorbitol dehydrogenase (353 aa).

Cys45 is a Zn(2+) binding site. Tyr51 serves as a coordination point for substrate. Zn(2+) contacts are provided by His70 and Glu71. Glu156 is a binding site for substrate. Residues Val184, Asp204, Arg209, 271–273 (VGL), and 296–298 (IFR) each bind NAD(+). Substrate is bound by residues Arg298 and Tyr299.

Belongs to the zinc-containing alcohol dehydrogenase family. As to quaternary structure, homotetramer. Zn(2+) is required as a cofactor.

It catalyses the reaction keto-D-fructose + NADH + H(+) = D-sorbitol + NAD(+). The enzyme catalyses xylitol + NAD(+) = D-xylulose + NADH + H(+). It carries out the reaction L-iditol + NAD(+) = keto-L-sorbose + NADH + H(+). Polyol dehydrogenase that catalyzes the NAD(+)-dependent oxidation of various sugar alcohols. Is mostly active with D-sorbitol (D-glucitol), xylitol and L-iditol as substrates, leading to the C2-oxidized products D-fructose, D-xylulose and L-sorbose, respectively. This chain is Sorbitol dehydrogenase, found in Bacillus subtilis (strain 168).